The primary structure comprises 298 residues: Nucleotide-binding protein MLBr00563 (298 aa).

21 to 28 (GLSGAGRG) provides a ligand contact to ATP. 72-75 (DVRS) provides a ligand contact to GTP.

This sequence belongs to the RapZ-like family.

Functionally, displays ATPase and GTPase activities. The protein is Nucleotide-binding protein MLBr00563 of Mycobacterium leprae (strain Br4923).